We begin with the raw amino-acid sequence, 375 residues long: Succinyl-diaminopimelate desuccinylase (375 aa).

Histidine 66 provides a ligand contact to Zn(2+). Aspartate 68 is a catalytic residue. Aspartate 99 contacts Zn(2+). Glutamate 133 (proton acceptor) is an active-site residue. Zn(2+)-binding residues include glutamate 134, glutamate 162, and histidine 348.

This sequence belongs to the peptidase M20A family. DapE subfamily. As to quaternary structure, homodimer. Requires Zn(2+) as cofactor. Co(2+) is required as a cofactor.

The enzyme catalyses N-succinyl-(2S,6S)-2,6-diaminopimelate + H2O = (2S,6S)-2,6-diaminopimelate + succinate. It functions in the pathway amino-acid biosynthesis; L-lysine biosynthesis via DAP pathway; LL-2,6-diaminopimelate from (S)-tetrahydrodipicolinate (succinylase route): step 3/3. Catalyzes the hydrolysis of N-succinyl-L,L-diaminopimelic acid (SDAP), forming succinate and LL-2,6-diaminopimelate (DAP), an intermediate involved in the bacterial biosynthesis of lysine and meso-diaminopimelic acid, an essential component of bacterial cell walls. The polypeptide is Succinyl-diaminopimelate desuccinylase (Klebsiella pneumoniae (strain 342)).